The following is a 262-amino-acid chain: Acidic leucine-rich nuclear phosphoprotein 32 family member B (262 aa).

LRR repeat units follow at residues 16–40 (PGEVKELVLDNCRSDDGKIVGLSSD), 43–64 (NLEFLSMINVNLLSISNLPKLN), 65–87 (KLRKLELSDNRISGGLEVLAERT), and 89–110 (NLTHLNLSGNKIKDINTLEPLK). Positions 123 to 161 (CEVTMLINYRESVFTLLPQLTYLDGFDADEQEAPDSDPE) constitute an LRRCT domain. The segment covering 150-233 (ADEQEAPDSD…EDEEDDEADD (84 aa)) has biased composition (acidic residues). Residues 150–262 (ADEQEAPDSD…PEDEEDDEDD (113 aa)) form a disordered region. The Nuclear localization signal signature appears at 240–243 (KRKR). Residues 247-262 (DEGEEDPEDEEDDEDD) are compositionally biased toward acidic residues.

It belongs to the ANP32 family. As to quaternary structure, interacts with histones H3 and H4. Interacts with KLF5; this interaction induces promoter region-specific histone incorporation and inhibition of histone acetylation by ANP32B. In terms of processing, directly cleaved by caspase-3/CASP3.

The protein resides in the nucleus. In terms of biological role, multifunctional protein that is involved in the regulation of many processes including cell proliferation, apoptosis, cell cycle progression or transcription. Regulates the proliferation of neuronal stem cells, differentiation of leukemic cells and progression from G1 to S phase of the cell cycle. As negative regulator of caspase-3-dependent apoptosis, may act as an antagonist of ANP32A in regulating tissue homeostasis. Exhibits histone chaperone properties, able to recruit histones to certain promoters, thus regulating the transcription of specific genes. Also plays an essential role in the nucleocytoplasmic transport of specific mRNAs via the uncommon nuclear mRNA export receptor XPO1/CRM1. The chain is Acidic leucine-rich nuclear phosphoprotein 32 family member B (ANP32B) from Gallus gallus (Chicken).